The sequence spans 135 residues: Holo-[acyl-carrier-protein] synthase (135 aa).

2 residues coordinate Mg(2+): Asp-7 and Glu-57.

Belongs to the P-Pant transferase superfamily. AcpS family. Requires Mg(2+) as cofactor.

The protein localises to the cytoplasm. It carries out the reaction apo-[ACP] + CoA = holo-[ACP] + adenosine 3',5'-bisphosphate + H(+). Functionally, transfers the 4'-phosphopantetheine moiety from coenzyme A to a Ser of acyl-carrier-protein. The polypeptide is Holo-[acyl-carrier-protein] synthase (Corynebacterium glutamicum (strain R)).